Consider the following 330-residue polypeptide: Phenylalanine--tRNA ligase alpha subunit (330 aa).

E257 contributes to the Mg(2+) binding site.

Belongs to the class-II aminoacyl-tRNA synthetase family. Phe-tRNA synthetase alpha subunit type 1 subfamily. In terms of assembly, tetramer of two alpha and two beta subunits. The cofactor is Mg(2+).

Its subcellular location is the cytoplasm. The catalysed reaction is tRNA(Phe) + L-phenylalanine + ATP = L-phenylalanyl-tRNA(Phe) + AMP + diphosphate + H(+). The sequence is that of Phenylalanine--tRNA ligase alpha subunit from Acaryochloris marina (strain MBIC 11017).